We begin with the raw amino-acid sequence, 150 residues long: Large ribosomal subunit protein bL9 (150 aa).

The protein belongs to the bacterial ribosomal protein bL9 family.

Its function is as follows. Binds to the 23S rRNA. This is Large ribosomal subunit protein bL9 from Neisseria meningitidis serogroup C (strain 053442).